We begin with the raw amino-acid sequence, 121 residues long: Heme-degrading monooxygenase (121 aa).

An ABM domain is found at 2–101; sequence IIVTNTIKVE…EQREDRKGIV (100 aa). N6 provides a ligand contact to Fe cation. The segment at 76–98 is disordered; that stretch reads KSDSFKKAHGRTKDTREQREDRK. The span at 78–98 shows a compositional bias: basic and acidic residues; the sequence is DSFKKAHGRTKDTREQREDRK. H84 lines the heme pocket.

The protein belongs to the antibiotic biosynthesis monooxygenase family. Heme-degrading monooxygenase IsdG subfamily. In terms of assembly, homodimer.

The protein localises to the cytoplasm. It catalyses the reaction heme b + 3 reduced [NADPH--hemoprotein reductase] + 3 O2 = biliverdin IXalpha + CO + Fe(2+) + 3 oxidized [NADPH--hemoprotein reductase] + 3 H2O + H(+). Its function is as follows. Allows bacterial pathogens to use the host heme as an iron source. Catalyzes the oxidative degradation of the heme macrocyclic porphyrin ring to the biliverdin in the presence of a suitable electron donor such as ascorbate or NADPH--cytochrome P450 reductase, with subsequent release of free iron. This chain is Heme-degrading monooxygenase, found in Listeria welshimeri serovar 6b (strain ATCC 35897 / DSM 20650 / CCUG 15529 / CIP 8149 / NCTC 11857 / SLCC 5334 / V8).